We begin with the raw amino-acid sequence, 1663 residues long: Cortactin-binding protein 2 (1663 aa).

5 disordered regions span residues 1–23, 203–222, 359–440, 454–478, and 498–617; these read MATD…AGAA, KKKT…RSTE, QASH…LHPG, GNAN…SPTS, and RFTS…KPSI. A coiled-coil region spans residues 119–276; sequence KKMQERMSAQ…EQLKRGSDSK (158 aa). Over residues 386-396 the composition is skewed to low complexity; the sequence is PSTGSTPDPTS. R498 is modified (asymmetric dimethylarginine). A compositionally biased stretch (polar residues) spans 583 to 593; the sequence is TVASPPSSLPQ. ANK repeat units lie at residues 709–739, 743–772, 776–805, 809–838, 842–871, and 912–942; these read GRPT…DINY, DGHS…QVNA, NGFT…NINH, GGQT…NRSV, DGWT…PARG, and EGWT…EPER. The segment at 1446 to 1485 is disordered; that stretch reads NKKKGESGAWRKVNTSPRRKSGRFSLPTWNKPDLSTEGMK. S1524 bears the Phosphoserine mark. The segment at 1580–1663 is disordered; it reads SQKEVSPLSS…KNEHLEKPNK (84 aa). Residues 1582 to 1599 are compositionally biased toward polar residues; that stretch reads KEVSPLSSHQTTECSNSK. A compositionally biased stretch (low complexity) spans 1624 to 1638; it reads SQNTKRSSSSSNTRQ. The segment covering 1645–1663 has biased composition (basic and acidic residues); it reads SKEENWNLHKNEHLEKPNK.

As to quaternary structure, interacts with CTTN/cortactin SH3 domain. Interacts with STRN, STRN4/zinedin and MOB4/phocein; this interactions mediate the association with the STRIPAK core complex and may regulate dendritic spine distribution of the STRIPAK complex in hippocampal neurons. Activation of glutamate receptors weakens the interaction with STRN and STRN4.

It localises to the cytoplasm. The protein localises to the cell cortex. The protein resides in the cell projection. It is found in the dendritic spine. Regulates the dendritic spine distribution of CTTN/cortactin in hippocampal neurons, and thus controls dendritic spinogenesis and dendritic spine maintenance. Associates with the striatin-interacting phosphatase and kinase (STRIPAK) core complex to regulate dendritic spine distribution of the STRIPAK complex in hippocampal neurons. This chain is Cortactin-binding protein 2 (CTTNBP2), found in Pongo abelii (Sumatran orangutan).